Reading from the N-terminus, the 676-residue chain is Urocanate hydratase (676 aa).

Residues 126 to 127 (GG), Gln204, 251 to 253 (GMS), Glu271, 317 to 318 (NV), 343 to 347 (QTSCH), 354 to 355 (YY), and Tyr403 contribute to the NAD(+) site. The residue at position 534 (Lys534) is an N6-succinyllysine. Gly594 contacts NAD(+).

Belongs to the urocanase family. NAD(+) serves as cofactor.

The catalysed reaction is 4-imidazolone-5-propanoate = trans-urocanate + H2O. It functions in the pathway amino-acid degradation; L-histidine degradation into L-glutamate; N-formimidoyl-L-glutamate from L-histidine: step 2/3. The chain is Urocanate hydratase (Uroc1) from Mus musculus (Mouse).